We begin with the raw amino-acid sequence, 76 residues long: Alpha/kappa-conotoxin-like fe14.1 (76 aa).

The signal sequence occupies residues 1–24 (MPSVRSVTCCCLLWMMLSVQLVTP). Residues 25 to 39 (GSPGTAQLSGHRTAR) constitute a propeptide that is removed on maturation. Intrachain disulfides connect Cys-46–Cys-61 and Cys-50–Cys-63. Position 64 is an arginine amide (Arg-64). Residues 65–76 (GKRDVVSSSMAV) constitute a propeptide that is removed on maturation.

This sequence belongs to the conotoxin J superfamily. As to expression, expressed by the venom duct.

It is found in the secreted. Functionally, highly inhibits both nicotinic acetylcholine receptors (neuronal (alpha-3/beta-4) and muscular (alpha-1/beta-1/epsilon/delta) subtypes) and the voltage-gated potassium channel Kv1.6/KCNA6 subtype. This Conus ferrugineus (Cone snail) protein is Alpha/kappa-conotoxin-like fe14.1.